The sequence spans 346 residues: Putative aminopeptidase YhfE (346 aa).

Positions 68 and 185 each coordinate a divalent metal cation. Glu219 acts as the Proton acceptor in catalysis. A divalent metal cation-binding residues include Glu220, Asp240, and His320.

The protein belongs to the peptidase M42 family. A divalent metal cation serves as cofactor.

The polypeptide is Putative aminopeptidase YhfE (yhfE) (Bacillus subtilis (strain 168)).